Here is a 222-residue protein sequence, read N- to C-terminus: Endonuclease V (222 aa).

Residues Asp-34 and Asp-102 each coordinate Mg(2+).

This sequence belongs to the endonuclease V family. Mg(2+) serves as cofactor.

The protein resides in the cytoplasm. It catalyses the reaction Endonucleolytic cleavage at apurinic or apyrimidinic sites to products with a 5'-phosphate.. In terms of biological role, DNA repair enzyme involved in the repair of deaminated bases. Selectively cleaves double-stranded DNA at the second phosphodiester bond 3' to a deoxyinosine leaving behind the intact lesion on the nicked DNA. The sequence is that of Endonuclease V from Proteus mirabilis (strain HI4320).